We begin with the raw amino-acid sequence, 499 residues long: Potassium voltage-gated channel subfamily A member 2 (499 aa).

Positions methionine 1–proline 27 are disordered. Residues methionine 1 to isoleucine 125 are tetramerization domain. The Cytoplasmic portion of the chain corresponds to methionine 1 to glycine 160. A helical membrane pass occupies residues proline 161 to leucine 182. The Extracellular segment spans residues glutamate 183–proline 221. Asparagine 207 carries an N-linked (GlcNAc...) asparagine glycan. Residues phenylalanine 222–alanine 243 form a helical membrane-spanning segment. Cysteine 244 carries the S-palmitoyl cysteine lipid modification. Over cysteine 244–leucine 254 the chain is Cytoplasmic. The chain crosses the membrane as a helical span at residues methionine 255–alanine 275. Residues glutamate 276–serine 289 lie on the Extracellular side of the membrane. The chain crosses the membrane as a helical; Voltage-sensor span at residues leucine 290 to histidine 310. At serine 311–methionine 325 the chain is on the cytoplasmic side. The interval lysine 312–methionine 325 is S4-S5 linker. Residues arginine 326 to phenylalanine 347 form a helical membrane-spanning segment. Over phenylalanine 348–isoleucine 361 the chain is Extracellular. The segment at residues proline 362 to threonine 373 is an intramembrane region (helical). The Selectivity filter motif lies at threonine 374–aspartate 379. An intramembrane segment occupies threonine 374 to valine 381. Over proline 382–lysine 388 the chain is Extracellular. Residues isoleucine 389–tyrosine 417 form a helical membrane-spanning segment. The Cytoplasmic segment spans residues histidine 418–valine 499. The short motif at threonine 497 to valine 499 is the PDZ-binding element.

This sequence belongs to the potassium channel family. A (Shaker) (TC 1.A.1.2) subfamily. Kv1.2/KCNA2 sub-subfamily. As to quaternary structure, homotetramer and heterotetramer with other family members. In terms of tissue distribution, detected in tadpole brain and spinal cord.

The protein localises to the cell membrane. It carries out the reaction K(+)(in) = K(+)(out). In terms of biological role, voltage-gated potassium channel that mediates transmembrane potassium transport in excitable membranes, primarily in the brain and central nervous system. Prevents aberrant action potential firing and regulates neuronal output. Forms tetrameric potassium-selective channels through which potassium ions pass in accordance with their electrochemical gradient. The channel alternates between opened and closed conformations in response to the voltage difference across the membrane. Can form functional homotetrameric channels and heterotetrameric channels with other family members; the channels characteristics depend critically on the types of channel-forming alpha subunits that are present. Channel properties are modulated by cytoplasmic beta subunits that regulate the subcellular location of the alpha subunits. In vivo, membranes probably contain a mixture of heteromeric potassium channel complexes, making it difficult to assign currents observed in intact tissues to any particular potassium channel family member. Homotetrameric KCNA2 forms a delayed-rectifier potassium channel that opens in response to membrane depolarization, followed by slow spontaneous channel closure. Regulates neuronal excitability and plays a role as pacemaker in the regulation of neuronal action potentials. KCNA2-containing channels play a presynaptic role and prevent hyperexcitability and aberrant action potential firing. Response to toxins that are selective for KCNA2-containing potassium channels suggests that in Purkinje cells, dendritic subthreshold KCNA2-containing potassium channels prevent random spontaneous calcium spikes, suppressing dendritic hyperexcitability without hindering the generation of somatic action potentials, and thereby play an important role in motor coordination. Plays a role in the induction of long-term potentiation of neuron excitability in the CA3 layer of the hippocampus. In Xenopus laevis (African clawed frog), this protein is Potassium voltage-gated channel subfamily A member 2 (kcna2).